A 204-amino-acid polypeptide reads, in one-letter code: Inactive ribonuclease-like protein 9 (204 aa).

Positions 1–26 are cleaved as a signal peptide; that stretch reads MMRTLITTHPLLLLLLLQQLLQPVQF. 3 disulfides stabilise this stretch: Cys97–Cys152, Cys115–Cys167, and Cys122–Cys129. 2 N-linked (GlcNAc...) asparagine glycosylation sites follow: Asn130 and Asn142.

The protein belongs to the pancreatic ribonuclease family.

It is found in the secreted. In terms of biological role, does not exhibit any ribonuclease activity. The polypeptide is Inactive ribonuclease-like protein 9 (RNASE9) (Papio anubis (Olive baboon)).